The chain runs to 340 residues: Heat-inducible transcription repressor HrcA (340 aa).

The protein belongs to the HrcA family.

Functionally, negative regulator of class I heat shock genes (grpE-dnaK-dnaJ and groELS operons). Prevents heat-shock induction of these operons. This chain is Heat-inducible transcription repressor HrcA, found in Mycoplasma mycoides subsp. mycoides SC (strain CCUG 32753 / NCTC 10114 / PG1).